We begin with the raw amino-acid sequence, 118 residues long: Large ribosomal subunit protein bL19 (118 aa).

This sequence belongs to the bacterial ribosomal protein bL19 family.

This protein is located at the 30S-50S ribosomal subunit interface and may play a role in the structure and function of the aminoacyl-tRNA binding site. This Campylobacter curvus (strain 525.92) protein is Large ribosomal subunit protein bL19.